Here is a 164-residue protein sequence, read N- to C-terminus: Lipoprotein signal peptidase (164 aa).

Helical transmembrane passes span 12 to 32 (WLWLVVIVLIIDLGSKYLILQ), 42 to 62 (LFPSLNLHASAYYGAAFSFLA), 70 to 90 (WFFAGIAIGISVLLAVMMYRS), and 102 to 122 (ALIIGGALGNLFDRLWHGFVV). Active-site residues include Asp-123 and Asp-141. A helical transmembrane segment spans residues 137 to 157 (FNLADTAICVGAALIVLEGFL).

The protein belongs to the peptidase A8 family.

Its subcellular location is the cell inner membrane. It catalyses the reaction Release of signal peptides from bacterial membrane prolipoproteins. Hydrolyzes -Xaa-Yaa-Zaa-|-(S,diacylglyceryl)Cys-, in which Xaa is hydrophobic (preferably Leu), and Yaa (Ala or Ser) and Zaa (Gly or Ala) have small, neutral side chains.. Its pathway is protein modification; lipoprotein biosynthesis (signal peptide cleavage). In terms of biological role, this protein specifically catalyzes the removal of signal peptides from prolipoproteins. The polypeptide is Lipoprotein signal peptidase (Shigella flexneri serotype 5b (strain 8401)).